A 274-amino-acid chain; its full sequence is Large ribosomal subunit protein uL2 (274 aa).

Residues 223–264 form a disordered region; it reads VAMNPVDHPHGGGEGRTSGGRHPVSPWGVPTKGYKTRSNKRT.

Belongs to the universal ribosomal protein uL2 family. In terms of assembly, part of the 50S ribosomal subunit. Forms a bridge to the 30S subunit in the 70S ribosome.

Its function is as follows. One of the primary rRNA binding proteins. Required for association of the 30S and 50S subunits to form the 70S ribosome, for tRNA binding and peptide bond formation. It has been suggested to have peptidyltransferase activity; this is somewhat controversial. Makes several contacts with the 16S rRNA in the 70S ribosome. In Shewanella denitrificans (strain OS217 / ATCC BAA-1090 / DSM 15013), this protein is Large ribosomal subunit protein uL2.